Consider the following 317-residue polypeptide: EAPKMCGVTQNWESYEPIKKASQSNLTPAHQRYIELVIVADHGMFTKYNGDSDKIREWVRQMVNTVDEIYSYMYIDVALAGLEIWSNEDLINVQPAAPHTLDSFGKWRERDLLHRIHHDNAMLLTAIDFDGPTIGLAYVGTMCKPKGSTGVVQDHSTINLRVAVTMAHEIGHNLGIHHDTGSCSCGGYSCIMSPVISHEPSKYFSDCSYTQCWDFIMNQKPQCILNKPLRTDTVSTPVSGNELLEAGEECDCGSPGNPCCDAATCKLRQGAQCAEGLCCDQCRFMKEGTICRRARGDDLDDYCNGISAGCPRNPFHA.

Residues 1 to 26 (EAPKMCGVTQNWESYEPIKKASQSNL) constitute a propeptide that is removed on maturation. In terms of domain architecture, Peptidase M12B spans 32–228 (RYIELVIVAD…QKPQCILNKP (197 aa)). E35 and D119 together coordinate Ca(2+). 3 cysteine pairs are disulfide-bonded: C143–C223, C183–C207, and C185–C190. Residue H168 coordinates Zn(2+). E169 is an active-site residue. Zn(2+)-binding residues include H172 and H178. Ca(2+) contacts are provided by C223 and N226. Residues 229-244 (LRTDTVSTPVSGNELL) constitute a propeptide that is removed on maturation. A Disintegrin domain is found at 236–317 (TPVSGNELLE…AGCPRNPFHA (82 aa)). Disulfide bonds link C250–C259, C252–C260, C265–C279, C273–C303, C278–C282, and C291–C310. The short motif at 295–297 (RGD) is the Cell attachment site element.

It belongs to the venom metalloproteinase (M12B) family. P-II subfamily. P-IIa sub-subfamily. Monomer. It depends on Zn(2+) as a cofactor. As to expression, expressed by the venom gland.

The protein localises to the secreted. Metalloproteinase that impairs hemostasis in the envenomed animal. Functionally, inhibits GPIIb/GPIIIa (ITGA2B/ITGB3) binding to immobilized fibrinogen with an IC(50) of 2.2 nM and ADP-induced platelet aggregation with an IC(50) of 131 nM, respectively. Inhibits angiogenesis. By binding to vitronectin receptor (alpha-V/beta-3 (ITGAV/ITGB3)), also induces apoptosis of endothelial cells by blocking their attachment to extracellular matrix proteins. Its function is as follows. Inhibits platelet aggregation induced by ADP (IC(50) is 30 nM), collagen (IC(50) is 500 nM), thrombin and epinephrin (IC(50) is 160 nM). The protein is Zinc metalloproteinase/disintegrin of Gloydius brevicauda (Korean slamosa snake).